The following is a 72-amino-acid chain: Heat-stable enterotoxin A3/A4 (72 aa).

The N-terminal stretch at 1 to 19 is a signal peptide; it reads MKKSILFIFLSVLSFSPFA. Residues 20–53 constitute a propeptide that is removed on maturation; it reads QDAKPVESSKEKITLESKKCNIAKKSNKSGPESM. 3 cysteine pairs are disulfide-bonded: Cys59–Cys64, Cys60–Cys68, and Cys63–Cys71.

Belongs to the heat-stable enterotoxin family.

The protein resides in the secreted. Toxin which activates the particulate form of guanylate cyclase and increases cyclic GMP levels within the host intestinal epithelial cells. The sequence is that of Heat-stable enterotoxin A3/A4 (sta3) from Escherichia coli.